Here is an 827-residue protein sequence, read N- to C-terminus: MEKEQEQGSVASSASVTIPSTTSVSTSTSAGTLSNSSSRQQTVPQISVYGGITDRQTVQVIQQALNRQPSTVAAQYLQQMYAAQQQHLMLQTAALQQQHLSLAAVQQASIVAGRQSCSQHGSTSQQTVASQTTINLATSPAARHLISRAQSGSSVPVCIGQQAVLLGNSSTPTLTASQAQMYLRAQMAQQTNLVQVARSLGRAVPLSSQLIFTPTASVTAIQPEAPAPSINTPPTSGQVQNLALRSQQGALTSTLSQSQLQSLSVKQSVASVTGQSVARLKGLGAEPSPQGTAAKASPAETSSETTAKNDKTSDLTTSVCPSVTSVAGHPFISTAYTQIQTHQLLQQHKQQFVIQQQPQILQRGQAQLLEAAAIHPHTVQAVAIQSALPAQPQQCPIPLLPKVPVTCQQATIFHSTTVSQQALAQNGQAHILTHTKAPPLQLTAVKCQIHPVQIQQGVASQNVPDKDTPVLLEPQLLSIPIQEPTRTELRQSDKESQVKENTQGSVNVKAGVGSPPAMTSGSGNNAPTVTGSAPQNGESKPPPQAVVKPQILTHVIEGFVIQEGAEPFPVERPSLLIENLKQKQHHAYSDLQKHNADSEMEDLSLQELNNQPEPVRTCEFCGNVDFAFNFKRSKRFCSTVCAKRYNVGCTKRMGLFPGKSSPEDTKKPKASDESPKNCSTETRKRNPSIQTTTGASLLSPHPSHPSHGESSQCSDMSSYEEPISPLSNSSFGAPIEHEESFDHSRELTPLLTQHFLASDPTKWNVEDVYEFICSLPGCHEIAEEFRSQEIDGQALMLLKEDHLMSTMNIKLGPALKIFARISMLKDS.

Disordered stretches follow at residues 1 to 78 (MEKE…QYLQ), 282 to 316 (GLGA…SDLT), and 482 to 545 (QEPT…PPQA). The segment covering 9–38 (SVASSASVTIPSTTSVSTSTSAGTLSNSSS) has biased composition (low complexity). Over residues 485-498 (TRTELRQSDKESQV) the composition is skewed to basic and acidic residues. A compositionally biased stretch (polar residues) spans 517–538 (AMTSGSGNNAPTVTGSAPQNGE). The short motif at 540–570 (KPPPQAVVKPQILTHVIEGFVIQEGAEPFPV) is the HD1 element. An FCS-type zinc finger spans residues 609–643 (NNQPEPVRTCEFCGNVDFAFNFKRSKRFCSTVCAK). Positions 618, 621, 637, and 641 each coordinate Zn(2+). Residues 653 to 730 (MGLFPGKSSP…EPISPLSNSS (78 aa)) are disordered. Residues 661–675 (SPEDTKKPKASDESP) show a composition bias toward basic and acidic residues. Composition is skewed to polar residues over residues 687 to 696 (PSIQTTTGAS) and 708 to 717 (GESSQCSDMS). Residues 763–827 (WNVEDVYEFI…FARISMLKDS (65 aa)) enclose the SAM domain.

In terms of assembly, component of a PRC1-like complex. Isoform 1 expression is stronger at the posterior border than in the anterior region within individual somites; On the contrary, isoform 2 expression is higher at the posterior border.

It localises to the nucleus. Component of a Polycomb group (PcG) multiprotein PRC1-like complex, a complex class required to maintain the transcriptionally repressive state of many genes, including Hox genes, throughout development. PcG PRC1 complex acts via chromatin remodeling and modification of histones; it mediates monoubiquitination of histone H2A 'Lys-119', rendering chromatin heritably changed in its expressibility. This chain is Polyhomeotic-like protein 2 (phc2), found in Danio rerio (Zebrafish).